Here is a 398-residue protein sequence, read N- to C-terminus: Subtilisin-like protease CPC735_050320 (398 aa).

An N-terminal signal peptide occupies residues methionine 1–glycine 19. The propeptide occupies alanine 20–serine 117. Residues tyrosine 35–lysine 115 enclose the Inhibitor I9 domain. The Peptidase S8 domain occupies serine 127–glutamine 398. Active-site charge relay system residues include aspartate 159 and histidine 190. Residues asparagine 220 and asparagine 250 are each glycosylated (N-linked (GlcNAc...) asparagine). Serine 344 serves as the catalytic Charge relay system.

This sequence belongs to the peptidase S8 family.

Its subcellular location is the secreted. Secreted subtilisin-like serine protease with keratinolytic activity that contributes to pathogenicity. The polypeptide is Subtilisin-like protease CPC735_050320 (Coccidioides posadasii (strain C735) (Valley fever fungus)).